The primary structure comprises 372 residues: Alanine dehydrogenase 1 (372 aa).

H94 is an active-site residue. 170–200 (TYVIFGGGVAATNAANVALGLNAKVIIIELN) provides a ligand contact to NAD(+).

This sequence belongs to the AlaDH/PNT family.

The catalysed reaction is L-alanine + NAD(+) + H2O = pyruvate + NH4(+) + NADH + H(+). The protein operates within amino-acid degradation; L-alanine degradation via dehydrogenase pathway; NH(3) and pyruvate from L-alanine: step 1/1. May play a role in cell wall synthesis as L-alanine is an important constituent of the peptidoglycan layer. The protein is Alanine dehydrogenase 1 (ald1) of Staphylococcus aureus (strain bovine RF122 / ET3-1).